We begin with the raw amino-acid sequence, 72 residues long: Translation initiation factor IF-1 (72 aa).

In terms of domain architecture, S1-like spans methionine 1–lysine 72. Tyrosine 60 bears the Phosphotyrosine mark.

The protein belongs to the IF-1 family. In terms of assembly, component of the 30S ribosomal translation pre-initiation complex which assembles on the 30S ribosome in the order IF-2 and IF-3, IF-1 and N-formylmethionyl-tRNA(fMet); mRNA recruitment can occur at any time during PIC assembly.

It localises to the cytoplasm. In terms of biological role, one of the essential components for the initiation of protein synthesis. Stabilizes the binding of IF-2 and IF-3 on the 30S subunit to which N-formylmethionyl-tRNA(fMet) subsequently binds. Helps modulate mRNA selection, yielding the 30S pre-initiation complex (PIC). Upon addition of the 50S ribosomal subunit IF-1, IF-2 and IF-3 are released leaving the mature 70S translation initiation complex. In Shouchella clausii (strain KSM-K16) (Alkalihalobacillus clausii), this protein is Translation initiation factor IF-1.